A 105-amino-acid polypeptide reads, in one-letter code: MATLQQQKIRIRLKAFDRRLLDTSCDKIVDTANRTNAAAVGPIPLPTKRKIYCVLRSPHVDKDSREHFETRTHRRIIDIYQPSSKTIDALMKLDLPAGVDIEVKL.

It belongs to the universal ribosomal protein uS10 family. Part of the 30S ribosomal subunit.

Its function is as follows. Involved in the binding of tRNA to the ribosomes. The sequence is that of Small ribosomal subunit protein uS10 from Synechocystis sp. (strain ATCC 27184 / PCC 6803 / Kazusa).